Consider the following 1599-residue polypeptide: Protein TOPAZ1 (1599 aa).

4 disordered regions span residues 1-42 (MVAQ…KESL), 159-185 (GCMHVPENSSKSKKENPRSLIDKTDPS), 802-836 (PNVAEEHQSADSKHMELPEKKEPSDHLRELPVPDP), and 867-889 (VTHETSSNEKPGGLSEQTKSSDL). 2 stretches are compositionally biased toward basic and acidic residues: residues 168–183 (SKSKKENPRSLIDKTD) and 805–832 (AEEHQSADSKHMELPEKKEPSDHLRELP). Polar residues predominate over residues 874-884 (NEKPGGLSEQT).

In terms of tissue distribution, expressed in both adult testis and fetal ovary, mostly in germ cells (at protein level).

Its subcellular location is the cytoplasm. The protein localises to the cytosol. In terms of biological role, important for normal spermatogenesis and male fertility. Specifically required for progression to the post-meiotic stages of spermatocyte development. Seems to be necessary for normal expression levels of a number of testis-expressed gene transcripts, although its role in this process is unclear. The sequence is that of Protein TOPAZ1 (TOPAZ1) from Ovis aries (Sheep).